The sequence spans 164 residues: R-phycoerythrin alpha chain (164 aa).

Residues Cys-82 and Cys-139 each contribute to the (2R,3E)-phycoerythrobilin site.

This sequence belongs to the phycobiliprotein family. Heterodimer of an alpha and a beta chain. Post-translationally, contains two covalently linked bilin chromophores.

It is found in the plastid. It localises to the chloroplast thylakoid membrane. Its function is as follows. Light-harvesting photosynthetic bile pigment-protein from the phycobiliprotein complex. The protein is R-phycoerythrin alpha chain (cpeA) of Porphyra purpurea (Red seaweed).